A 281-amino-acid polypeptide reads, in one-letter code: ATP synthase gamma chain (281 aa).

This sequence belongs to the ATPase gamma chain family. F-type ATPases have 2 components, CF(1) - the catalytic core - and CF(0) - the membrane proton channel. CF(1) has five subunits: alpha(3), beta(3), gamma(1), delta(1), epsilon(1). CF(0) has three main subunits: a, b and c.

The protein resides in the cell membrane. In terms of biological role, produces ATP from ADP in the presence of a proton gradient across the membrane. The gamma chain is believed to be important in regulating ATPase activity and the flow of protons through the CF(0) complex. The protein is ATP synthase gamma chain of Clostridium pasteurianum.